Reading from the N-terminus, the 98-residue chain is ATP synthase subunit c (98 aa).

The next 2 helical transmembrane spans lie at 27–47 (ALAL…GLGL) and 73–93 (IIGA…FFVV).

It belongs to the ATPase C chain family. F-type ATPases have 2 components, F(1) - the catalytic core - and F(0) - the membrane proton channel. F(1) has five subunits: alpha(3), beta(3), gamma(1), delta(1), epsilon(1). F(0) has three main subunits: a(1), b(2) and c(10-14). The alpha and beta chains form an alternating ring which encloses part of the gamma chain. F(1) is attached to F(0) by a central stalk formed by the gamma and epsilon chains, while a peripheral stalk is formed by the delta and b chains.

It is found in the cell inner membrane. Functionally, f(1)F(0) ATP synthase produces ATP from ADP in the presence of a proton or sodium gradient. F-type ATPases consist of two structural domains, F(1) containing the extramembraneous catalytic core and F(0) containing the membrane proton channel, linked together by a central stalk and a peripheral stalk. During catalysis, ATP synthesis in the catalytic domain of F(1) is coupled via a rotary mechanism of the central stalk subunits to proton translocation. Its function is as follows. Key component of the F(0) channel; it plays a direct role in translocation across the membrane. A homomeric c-ring of between 10-14 subunits forms the central stalk rotor element with the F(1) delta and epsilon subunits. The protein is ATP synthase subunit c of Protochlamydia amoebophila (strain UWE25).